A 187-amino-acid chain; its full sequence is UPF0301 protein YPTS_3341 (187 aa).

This sequence belongs to the UPF0301 (AlgH) family.

This chain is UPF0301 protein YPTS_3341, found in Yersinia pseudotuberculosis serotype IB (strain PB1/+).